The sequence spans 341 residues: Alpha-1,4-N-acetylglucosaminyltransferase (341 aa).

Residues 1 to 4 are Cytoplasmic-facing; the sequence is MLKE. Residues 5–25 traverse the membrane as a helical; Signal-anchor for type II membrane protein segment; that stretch reads IYLSLSLVLVFACGLLYQLTM. Over 26–341 the chain is Lumenal; it reads RSQCFFACLP…VSKKPGTGSR (316 aa). Asparagine 100 is a glycosylation site (N-linked (GlcNAc...) asparagine). The short motif at 168–170 is the DXD motif element; it reads DTD.

It belongs to the glycosyltransferase 32 family.

It localises to the golgi apparatus membrane. Its pathway is protein modification; protein glycosylation. Functionally, catalyzes the transfer of N-acetylglucosamine (GlcNAc) to core 2 branched O-glycans. Necessary for the synthesis of type III mucin which is specifically produced in the stomach, duodenum, and pancreatic duct. May protect against inflammation-associated gastric adenocarcinoma. The sequence is that of Alpha-1,4-N-acetylglucosaminyltransferase from Mus musculus (Mouse).